The primary structure comprises 88 residues: Small ribosomal subunit protein uS17c (88 aa).

The protein belongs to the universal ribosomal protein uS17 family. As to quaternary structure, part of the 30S ribosomal subunit.

It is found in the plastid. Its subcellular location is the cyanelle. Its function is as follows. One of the primary rRNA binding proteins, it binds specifically to the 5'-end of 16S ribosomal RNA. The polypeptide is Small ribosomal subunit protein uS17c (rps17) (Cyanophora paradoxa).